We begin with the raw amino-acid sequence, 153 residues long: MSAKLKQLEDILRPVVEGLGYEFWGIEFRSHGHHSKLRVFIDDAENGIAIDDCEKVSRQVSGVMDVEDPIQTEYTLEVSSPGMDRPLFRLEQYEAFIGHKVQIKLRMAFEGRRKFLGLIKGVEGDDVVVVVDDHEYLLPFDSIEKANIVPVFE.

This sequence belongs to the RimP family.

The protein localises to the cytoplasm. In terms of biological role, required for maturation of 30S ribosomal subunits. The polypeptide is Ribosome maturation factor RimP (Marinobacter nauticus (strain ATCC 700491 / DSM 11845 / VT8) (Marinobacter aquaeolei)).